Here is an 855-residue protein sequence, read N- to C-terminus: DNA mismatch repair protein MutS (855 aa).

Position 617–624 (617–624) interacts with ATP; the sequence is GPNMGGKS.

It belongs to the DNA mismatch repair MutS family.

Its function is as follows. This protein is involved in the repair of mismatches in DNA. It is possible that it carries out the mismatch recognition step. This protein has a weak ATPase activity. The sequence is that of DNA mismatch repair protein MutS from Baumannia cicadellinicola subsp. Homalodisca coagulata.